A 177-amino-acid chain; its full sequence is Large ribosomal subunit protein uL6 (177 aa).

Belongs to the universal ribosomal protein uL6 family. In terms of assembly, part of the 50S ribosomal subunit.

Functionally, this protein binds to the 23S rRNA, and is important in its secondary structure. It is located near the subunit interface in the base of the L7/L12 stalk, and near the tRNA binding site of the peptidyltransferase center. In Pseudomonas syringae pv. syringae (strain B728a), this protein is Large ribosomal subunit protein uL6.